Here is a 420-residue protein sequence, read N- to C-terminus: Phytoene synthase 1, chloroplastic (420 aa).

The N-terminal 70 residues, 1-70, are a transit peptide targeting the chloroplast; it reads MAAITLLRSA…GEIARTSPVY (70 aa).

The protein belongs to the phytoene/squalene synthase family. Expressed in leaves. Highly expressed in developing leaves. Expressed at low levels in roots.

The protein resides in the plastid. Its subcellular location is the chloroplast membrane. It is found in the chloroplast. It localises to the plastoglobule. The enzyme catalyses 2 (2E,6E,10E)-geranylgeranyl diphosphate = 15-cis-phytoene + 2 diphosphate. Functionally, catalyzes the conversion of geranylgeranyl diphosphate to phytoene. Mediates the first committed step in carotenoid biosynthesis. The protein is Phytoene synthase 1, chloroplastic of Oryza sativa subsp. japonica (Rice).